The following is a 463-amino-acid chain: Proton-coupled folate transporter (463 aa).

The Cytoplasmic portion of the chain corresponds to 1-27 (MVSPDDSPEIRDRPRPRRCLLPASVTV). A helical membrane pass occupies residues 28–46 (EPVIFLSMFALALQGPLAT). The Extracellular portion of the chain corresponds to 47-86 (QYLWDRLSADIGFNGTRTVGCAMNGSKSAGPEQQEVETLT). 2 N-linked (GlcNAc...) asparagine glycosylation sites follow: Asn60 and Asn70. Cys67 and Cys302 are disulfide-bonded. A helical transmembrane segment spans residues 87-112 (AHWSLYINLGGFLVGLFSVMLLGPWS). The Cytoplasmic portion of the chain corresponds to 113-116 (DKVG). Residues 117-139 (RRPVLMLPCIGLALQAAVYLLVM) traverse the membrane as a helical segment. The Extracellular portion of the chain corresponds to 140–144 (YQELH). The helical transmembrane segment at 145–158 (VGYFLIGRFISGIS) threads the bilayer. The Cytoplasmic portion of the chain corresponds to 159–181 (GDFNMILAGCFAYIADVSDRQSR). Residues Asp160 and Glu189 each contribute to the H(+) site. The chain crosses the membrane as a helical span at residues 182–207 (TFRVAVLEACLGIAGMVASIIGGHWR). Topologically, residues 208 to 212 (KAQGY) are extracellular. Residues 213-231 (INPFWLVFAVNLFTALYVY) traverse the membrane as a helical segment. Residues 232-270 (FCVEESVKDKKPARLFTHRHYQSFFRLFTVQGENNRRRK) lie on the Cytoplasmic side of the membrane. A helical transmembrane segment spans residues 271 to 293 (LFLYSLALLVVVTVHMGAKNLFV). H(+) is bound at residue His285. The Extracellular portion of the chain corresponds to 294–306 (LYELSYPLCWDSD). A helical membrane pass occupies residues 307–329 (LIGYGSAAEHLTYLSSLAGLRLF). At 330-335 (QLCLAD) the chain is on the cytoplasmic side. The chain crosses the membrane as a helical span at residues 336 to 355 (SWVAEMGFISNISGLVVISL). At 356–359 (ASTT) the chain is on the extracellular side. The helical transmembrane segment at 360 to 380 (PIMFTGYGLRFFAMATTPVIR) threads the bilayer. Over 381–392 (SKLSKMVEEGEQ) the chain is Cytoplasmic. The helical transmembrane segment at 393–418 (GALFSSVACVEGLSFLLATGLFNSLY) threads the bilayer. The Extracellular segment spans residues 419–426 (PATLHFMK). The chain crosses the membrane as a helical span at residues 427-445 (GFPFLLGALLLLIPAGIIG). The Cytoplasmic segment spans residues 446-463 (LIEVCEQKPMYSQFSEIS).

It belongs to the major facilitator superfamily. SLC46A family. As to quaternary structure, monomer.

It is found in the cell membrane. The protein resides in the apical cell membrane. The protein localises to the basolateral cell membrane. Its subcellular location is the endosome membrane. It localises to the cytoplasm. It catalyses the reaction folate(in) + H(+)(in) = folate(out) + H(+)(out). The enzyme catalyses (6S)-5-methyl-5,6,7,8-tetrahydrofolate(in) + H(+)(in) = (6S)-5-methyl-5,6,7,8-tetrahydrofolate(out) + H(+)(out). It carries out the reaction methotrexate(in) + H(+)(in) = methotrexate(out) + H(+)(out). The catalysed reaction is pemetrexed(in) + H(+)(in) = pemetrexed(out) + H(+)(out). In terms of biological role, proton-coupled folate symporter that mediates folate absorption using an H(+) gradient as a driving force. Involved in the intestinal absorption of folates at the brush-border membrane of the proximal jejunum, and the transport from blood to cerebrospinal fluid across the choroid plexus. Functions at acidic pH via alternate outward- and inward-open conformation states. Protonation of residues in the outward open state primes the protein for transport. Binding of folate promotes breaking of salt bridge network and subsequent closure of the extracellular gate, leading to the inward-open state and release of protons and folate. Also able to transport antifolate drugs, such as methotrexate and pemetrexed. Also acts as a lower-affinity, pH-independent heme carrier protein and constitutes the main importer of heme in the intestine. Imports heme in the retina and retinal pigment epithelium, in neurons of the hippocampus, in hepatocytes and in the renal epithelial cells. This is Proton-coupled folate transporter from Xenopus laevis (African clawed frog).